Here is a 77-residue protein sequence, read N- to C-terminus: uncharacterized protein (77 aa).

The helical transmembrane segment at 57–76 (NSAVICTLIANLMAFFMLLT) threads the bilayer.

It is found in the membrane. This is an uncharacterized protein from Schizosaccharomyces pombe (strain 972 / ATCC 24843) (Fission yeast).